The primary structure comprises 439 residues: High-energy light unresponsive protein 1 (439 aa).

The Cytoplasmic segment spans residues 1-67 (MPPPSSHSNI…LGLNQSIRPN (67 aa)). Residues 68–88 (NSLLFRIYSWLVFCLLLFTTL) form a helical membrane-spanning segment. Residues 89 to 114 (RKFNQVGVRPNGTRENLQEFFANPRS) are Extracellular-facing. Residues 115 to 135 (MITLCNALIMLSGLLASLQLY) form a helical membrane-spanning segment. Residues 136–164 (TLGAKRLKPLKILCQFSLNVRTKQAERRQ) are Cytoplasmic-facing. Residues 165-185 (FMINTFLAVFSGLLALTMAAT) form a helical membrane-spanning segment. Over 186 to 211 (YAMSKWGYILYIVGTPNLDTETIFCV) the chain is Extracellular. The chain crosses the membrane as a helical span at residues 212–232 (LLDSYALFVSRAAISALAILF). Residues 233–290 (YQHCSVIRRSIKHLINEMVPAEQDECPLPESSLQKIHDCQISYQRIFNGKAVIEEYYS) are Cytoplasmic-facing. Residues 291–311 (FVLFYSYGVCIPIFCFLMFVG) traverse the membrane as a helical segment. Topologically, residues 312-324 (MSAQSICWSEVVS) are extracellular. A helical membrane pass occupies residues 325 to 345 (IVIWIVNAILVLLLFSLPAFM). At 346 to 402 (INEDGDRLVASSFRMYHETFHEERDLTVLSQMTFFTFQIHSTKLTLSACNYFYMDRS) the chain is on the cytoplasmic side. The helical transmembrane segment at 403-423 (ILLSLFSAILTYFLILWEFDI) threads the bilayer. Residues 424–439 (KNNQSLQNIANHTIHT) lie on the Extracellular side of the membrane.

This sequence belongs to the insect chemoreceptor superfamily. Gustatory receptor (GR) family. As to expression, expressed in the AVG and PVT neurons of the tail.

It is found in the cell membrane. Photoreceptor for short wavelength (UV) light that mediates UV-light-induced avoidance behavior. Directly senses and absorbs both UV-A and UV-B light with very high efficiency. Absorption of UV-B but not UV-A light shows resistance to photobleaching. In contrast to other photoreceptors, does not use a prosthetic chromophore to capture photons and only depends on its protein conformation. Might have a role in response to white light exposure. This Caenorhabditis elegans protein is High-energy light unresponsive protein 1.